We begin with the raw amino-acid sequence, 389 residues long: Succinate--CoA ligase [ADP-forming] subunit beta (389 aa).

Residues 9–236 (RDMFEAHGVP…KDSADPLEAK (228 aa)) enclose the ATP-grasp domain. Residues K45, 52 to 54 (GRG), A94, and E99 each bind ATP. Mg(2+) is bound by residues N191 and D205. Substrate-binding positions include N256 and 318 to 320 (GIT).

The protein belongs to the succinate/malate CoA ligase beta subunit family. As to quaternary structure, heterotetramer of two alpha and two beta subunits. Mg(2+) serves as cofactor.

The enzyme catalyses succinate + ATP + CoA = succinyl-CoA + ADP + phosphate. The catalysed reaction is GTP + succinate + CoA = succinyl-CoA + GDP + phosphate. Its pathway is carbohydrate metabolism; tricarboxylic acid cycle; succinate from succinyl-CoA (ligase route): step 1/1. In terms of biological role, succinyl-CoA synthetase functions in the citric acid cycle (TCA), coupling the hydrolysis of succinyl-CoA to the synthesis of either ATP or GTP and thus represents the only step of substrate-level phosphorylation in the TCA. The beta subunit provides nucleotide specificity of the enzyme and binds the substrate succinate, while the binding sites for coenzyme A and phosphate are found in the alpha subunit. This chain is Succinate--CoA ligase [ADP-forming] subunit beta, found in Renibacterium salmoninarum (strain ATCC 33209 / DSM 20767 / JCM 11484 / NBRC 15589 / NCIMB 2235).